A 431-amino-acid polypeptide reads, in one-letter code: Divergent protein kinase domain 1B (431 aa).

Residues 1–30 (MRKLRRLVHMVLFCPISKGLQSRLPGIKVK) are Cytoplasmic-facing. A May mediate ER retention motif is present at residues 5 to 6 (RR). A helical membrane pass occupies residues 31–51 (YLFLAWLSVFVGSWVVYMHYS). Topologically, residues 52 to 431 (SYSELCRGHV…WKKISNTKYS (380 aa)) are lumenal. Cystine bridges form between Cys57–Cys94 and Cys62–Cys117.

This sequence belongs to the DIPK family. Among the many cysteines in the lumenal domain, most are probably involved in disulfide bonds.

The protein resides in the endoplasmic reticulum membrane. In Xenopus tropicalis (Western clawed frog), this protein is Divergent protein kinase domain 1B (dipk1b).